The sequence spans 158 residues: Urease accessory protein UreE (158 aa).

Belongs to the UreE family.

Its subcellular location is the cytoplasm. In terms of biological role, involved in urease metallocenter assembly. Binds nickel. Probably functions as a nickel donor during metallocenter assembly. This Klebsiella pneumoniae subsp. pneumoniae (strain ATCC 700721 / MGH 78578) protein is Urease accessory protein UreE.